A 173-amino-acid chain; its full sequence is NADH-ubiquinone oxidoreductase chain 6 (173 aa).

The next 6 helical transmembrane spans lie at 1 to 21 (MTYFVLFLGLCFVLGGLAVAS), 27 to 47 (YGVVGLVLASIAGCGWLLSLG), 48 to 68 (VSFVSLVLFMVYLGGMLVVFV), 87 to 107 (VVGYGVSLITVLVVGVVVGGF), 113 to 133 (FGVITVDSVGMFSVRLDFGGV), and 139 to 159 (CGVGMFLVAGWGLLLTLFVVL).

The protein belongs to the complex I subunit 6 family.

The protein localises to the mitochondrion membrane. It catalyses the reaction a ubiquinone + NADH + 5 H(+)(in) = a ubiquinol + NAD(+) + 4 H(+)(out). Its function is as follows. Core subunit of the mitochondrial membrane respiratory chain NADH dehydrogenase (Complex I) that is believed to belong to the minimal assembly required for catalysis. Complex I functions in the transfer of electrons from NADH to the respiratory chain. The immediate electron acceptor for the enzyme is believed to be ubiquinone. The chain is NADH-ubiquinone oxidoreductase chain 6 (MT-ND6) from Alle alle (Dovekie).